The chain runs to 2493 residues: Polyprotein P1234 (2493 aa).

The region spanning 28 to 259 (EAKQVTDNDH…EKRDLLRSWH (232 aa)) is the Alphavirus-like MT domain. The tract at residues 244–263 (GSTIYHEKRDLLRSWHLPSV) is nsP1 membrane-binding. Cysteine 419 is lipidated: S-palmitoyl cysteine; by host. The 152-residue stretch at 690-841 (ELVDPPFHEF…HEICTQVFHK (152 aa)) folds into the (+)RNA virus helicase ATP-binding domain. Position 721–728 (721–728 (GVPGSGKS)) interacts with a ribonucleoside 5'-triphosphate. Residues 842 to 990 (SISRRCTKSV…IEEWQAEHDA (149 aa)) enclose the (+)RNA virus helicase C-terminal domain. One can recognise a Peptidase C9 domain in the interval 1003 to 1322 (DVFQNKANVC…STLTNIYTGS (320 aa)). The nucleolus localization signal stretch occupies residues 1004 to 1023 (VFQNKANVCWAKALVPVLKT). Catalysis depends on cysteine 1012, which acts as the For cysteine protease nsP2 activity. The Nuclear export signal motif lies at 1056–1065 (VRFFGLDLDS). Residue histidine 1081 is the For cysteine protease nsP2 activity of the active site. Positions 1179-1183 (PGKKV) match the Nuclear localization signal motif. One can recognise a Macro domain in the interval 1330–1489 (APSYHVVRGD…TLKEAVARRE (160 aa)). The ADP-D-ribose site is built by aspartate 1339, asparagine 1353, glycine 1361, glycine 1441, isoleucine 1442, and phenylalanine 1443. Cysteine 1596, cysteine 1598, cysteine 1621, and cysteine 1639 together coordinate Zn(2+). Disordered regions lie at residues 1664–1684 (PVEETPESPAENQSTEGTPEQ) and 1790–1826 (APRTVFRNPPHPAPRTRTPPLAHSRASSRTSLVSTPP). The segment covering 1814–1823 (RASSRTSLVS) has biased composition (polar residues). 2 consecutive repeat copies span residues 1818–1839 (RTSLVSTPPGVNRVITREELEA) and 1852–1873 (RTSLVSNPPGVNRVITREEFEA). Residues 1818–1873 (RTSLVSTPPGVNRVITREELEALTPSRAPSRSASRTSLVSNPPGVNRVITREEFEA) are 2 X 21 AA approximate repeats, binding to host FXR family members. One can recognise a RdRp catalytic domain in the interval 2250–2365 (DCVLETDIAS…KGVKSDKLMA (116 aa)).

Interacts with non-structural protein 3. Interacts with RNA-directed RNA polymerase nsP4. Interacts with protease nsP2. interacts with itself. As to quaternary structure, interacts with mRNA-capping enzyme nsP1. Interacts with host DDX1. Interacts with host DDX3. Interacts (via C-terminus) with host FXR1; this interaction inhibits the formation of host stress granules on viral mRNAs and the nsp3-FXR1 complexes bind viral RNAs and probably orchestrate the assembly of viral replication complexes. Interacts (via C-terminus) with host FXR2; this interaction inhibits the formation of host stress granules on viral mRNAs and the nsp3-FXR2 complexes bind viral RNAs and probably orchestrate the assembly of viral replication complexes. Interacts (via C-terminus) with host FMR1; this interaction inhibits the formation of host stress granules on viral mRNAs and the nsp3-FMR1 complexes bind viral RNAs and probably orchestrate the assembly of viral replication complexes. In terms of assembly, interacts with mRNA-capping enzyme nsP1. Interacts with protease nsP2. interacts with itself. Interacts with RNA-directed RNA polymerase nsP4. Interacts with mRNA-capping enzyme nsP1. Interacts with KPNA1/karyopherin-alpha1; this interaction probably allows the active transport of protease nsP2 into the host nucleus. Mg(2+) serves as cofactor. Requires Mn(2+) as cofactor. Post-translationally, specific enzymatic cleavages in vivo yield mature proteins. The processing of the polyprotein is temporally regulated. In early stages (1.7 hpi), P1234 is first cleaved in trans through its nsP2 protease activity, releasing P123' and nsP4, which associate to form the early replication complex. At the same time, P1234 is also cut at the nsP1/nsP2 site early in infection but with lower efficiency. After replication of the viral minus-strand RNAs (4 hpi), the polyproteins are cut at the nsP1/nsP2 and nsP2/nsP3 sites very efficiently, preventing accumulation of P123' and P1234 and allowing the formation of the late replication complex. NsP3'/nsP4 site is not cleaved anymore and P34 is produced rather than nsP4. In terms of processing, specific enzymatic cleavages in vivo yield mature proteins. The processing of the polyprotein is temporally regulated. In early stages (1.7 hpi), P123 is cleaved at the nsP1/nsP2 site with low efficiency. After replication of the viral minus-strand RNAs (4 hpi), the polyproteins are cut at the nsP1/nsP2 and nsP2/nsP3 sites very efficiently, preventing accumulation of P123 and allowing the formation of the late replication complex. Specific enzymatic cleavages in vivo yield mature proteins. The processing of the polyprotein is temporally regulated. In early stages (1.7 hpi), P123' is cleaved at the nsP1/nsP2 site with low efficiency. After replication of the viral minus-strand RNAs (4 hpi), the polyproteins are cut at the nsP1/nsP2 and nsP2/nsP3 sites very efficiently, preventing accumulation of P123' and allowing the formation of the late replication complex. Post-translationally, palmitoylated by host palmitoyltransferases ZDHHC2 and ZDHHC19. In terms of processing, phosphorylated by host on serines and threonines. Ubiquitinated; targets the protein for rapid degradation via the ubiquitin system. Nsp4 is present in extremely low quantities due to low frequency of translation through the amber stop-codon and the degradation by the ubiquitin pathway.

The protein resides in the host cytoplasmic vesicle membrane. Its subcellular location is the host cell membrane. It is found in the host cell projection. The protein localises to the host filopodium. It localises to the host nucleus. The protein resides in the host cytoplasm. The enzyme catalyses GTP + S-adenosyl-L-methionine = N(7)-methyl-GTP + S-adenosyl-L-homocysteine. It carries out the reaction N(7)-methyl-GTP + L-histidyl-[protein] = N(tele)-(N(7)-methylguanosine 5'-phospho)-L-histidyl-[protein] + diphosphate. The catalysed reaction is N(tele)-(N(7)-methylguanosine 5'-phospho)-L-histidyl-[protein] + a 5'-end diphospho-(purine-ribonucleoside) in mRNA + H(+) = a 5'-end (N(7)-methyl 5'-triphosphoguanosine)-(purine-ribonucleoside) in mRNA + L-histidyl-[protein]. It catalyses the reaction a 5'-end triphospho-ribonucleoside in mRNA + H2O = a 5'-end diphospho-ribonucleoside in mRNA + phosphate + H(+). The enzyme catalyses a ribonucleoside 5'-triphosphate + H2O = a ribonucleoside 5'-diphosphate + phosphate + H(+). It carries out the reaction ATP + H2O = ADP + phosphate + H(+). The catalysed reaction is RNA(n) + a ribonucleoside 5'-triphosphate = RNA(n+1) + diphosphate. It catalyses the reaction 4-O-(ADP-D-ribosyl)-L-aspartyl-[protein] + H2O = L-aspartyl-[protein] + ADP-D-ribose + H(+). The enzyme catalyses 5-O-(ADP-D-ribosyl)-L-glutamyl-[protein] + H2O = L-glutamyl-[protein] + ADP-D-ribose + H(+). It carries out the reaction RNA(n) + ATP = RNA(n)-3'-adenine ribonucleotide + diphosphate. The catalysed reaction is ADP-alpha-D-ribose 1''-phosphate + H2O = ADP-D-ribose + phosphate. With respect to regulation, inhibited by sinefungin. Functionally, inactive precursor of the viral replicase, which is activated by cleavages carried out by the viral protease nsP2. In terms of biological role, the early replication complex formed by the polyprotein P123 and nsP4 synthesizes the minus-strand RNAs (antigenome). Polyprotein P123 is a short-lived polyprotein that accumulates during early stage of infection. As soon P123 is cleaved into mature proteins, the plus-strand RNAs synthesis begins. The early replication complex formed by the polyprotein P123' and nsP4 synthesizes minus-strand RNAs (antigenome). Polyprotein P123' is a short-lived polyprotein that accumulates during early stage of infection. As soon P123' is cleaved into mature proteins, the plus-strand RNAs synthesis begins. Its function is as follows. Cytoplasmic capping enzyme that catalyzes two virus-specific reactions: methyltransferase and nsP1 guanylyltransferase. mRNA-capping is necessary since all viral RNAs are synthesized in the cytoplasm, and host capping enzymes are restricted to the nucleus. The enzymatic reaction involves a covalent link between 7-methyl-GMP and nsP1, whereas eukaryotic capping enzymes form a covalent complex only with GMP. NsP1 capping consists in the following reactions: GTP is first methylated into 7-methyl-GMP and then is covalently linked to nsP1 to form the m7GMp-nsP1 complex from which 7-methyl-GMP complex is transferred to the mRNA to create the cap structure. NsP1 is also needed for the initiation of the minus-strand RNAs synthesis. Probably serves as a membrane anchor for the replication complex composed of nsP1-nsP4. Nsp1 is needed for the initiation of the minus-strand RNAs synthesis. Palmitoylated nsP1 is remodeling host cell cytoskeleton, and induces filopodium-like structure formation at the surface of the host cell. Functionally, multifunctional protein whose N-terminus is part of the RNA polymerase complex and displays NTPase, RNA triphosphatase and helicase activities. NTPase and RNA triphosphatase are involved in viral RNA capping and helicase keeps a check on the dsRNA replication intermediates. The C-terminus harbors a protease that specifically cleaves the polyproteins and releases the mature proteins. Required for the shutoff of minus-strand RNAs synthesis. Inhibits host translation to ensure maximal viral gene expression and evade host immune response. In terms of biological role, seems to be essential for minus-strand RNAs and subgenomic 26S mRNAs synthesis. Displays mono-ADP-ribosylhydrolase activity. ADP-ribosylation is a post-translational modification that controls various processes of the host cell and the virus probably needs to revert it for optimal viral replication. Binds proteins of FXR family and sequesters them into the viral RNA replication complexes thereby inhibiting the formation of host stress granules on viral mRNAs. The nsp3-FXR complexes bind viral RNAs and probably orchestrate the assembly of viral replication complexes, thanks to the ability of FXR family members to self-assemble and bind DNA. Seems to be essential for minus-strand RNAs and subgenomic 26S mRNAs synthesis. Displays mono-ADP-ribosylhydrolase activity. ADP-ribosylation is a post-translational modification that controls various processes of the host cell and the virus probably needs to revert it for optimal viral replication. Binds proteins of FXR family and sequesters them into the viral RNA replication complexes thereby inhibiting the formation of host stress granules on viral mRNAs. The nsp3'-FXR complexes bind viral RNAs and probably orchestrate the assembly of viral replication complexes, thanks to the ability of FXR family members to self-assemble and bind DNA. Its function is as follows. RNA dependent RNA polymerase. Replicates genomic and antigenomic RNA by recognizing replications specific signals. The early replication complex formed by the polyprotein P123 and nsP4 synthesizes minus-strand RNAs. The late replication complex composed of fully processed nsP1-nsP4 is responsible for the production of genomic and subgenomic plus-strand RNAs. The sequence is that of Polyprotein P1234 from Bos taurus (Bovine).